A 166-amino-acid chain; its full sequence is Phospholipase A2 inhibitor A1 (166 aa).

The N-terminal stretch at 1 to 19 (MRLILLSGLLLLGIFLANG) is a signal peptide. A C-type lectin domain is found at 46-161 (LKGSFLIVHK…CDDNLLVVCE (116 aa)). Intrachain disulfides connect Cys-83–Cys-160 and Cys-138–Cys-152. Asn-122 carries an N-linked (GlcNAc...) asparagine glycan.

The protein belongs to the alpha-type phospholipase A2 inhibitor family. Homotrimer; non-covalently linked. Expressed by the liver.

Its subcellular location is the secreted. This phospholipase A2 inhibitor binds directly phospholipase A2 in the presence or absence of calcium. This is Phospholipase A2 inhibitor A1 from Bothrops neuwiedi (Neuwied's lancehead).